We begin with the raw amino-acid sequence, 428 residues long: Enolase (428 aa).

Residue Q163 participates in (2R)-2-phosphoglycerate binding. E205 acts as the Proton donor in catalysis. Mg(2+) is bound by residues D242, E285, and D312. The (2R)-2-phosphoglycerate site is built by K337, R366, S367, and K388. Catalysis depends on K337, which acts as the Proton acceptor.

The protein belongs to the enolase family. Mg(2+) is required as a cofactor.

Its subcellular location is the cytoplasm. The protein resides in the secreted. It localises to the cell surface. It carries out the reaction (2R)-2-phosphoglycerate = phosphoenolpyruvate + H2O. The protein operates within carbohydrate degradation; glycolysis; pyruvate from D-glyceraldehyde 3-phosphate: step 4/5. In terms of biological role, catalyzes the reversible conversion of 2-phosphoglycerate (2-PG) into phosphoenolpyruvate (PEP). It is essential for the degradation of carbohydrates via glycolysis. The sequence is that of Enolase from Polynucleobacter asymbioticus (strain DSM 18221 / CIP 109841 / QLW-P1DMWA-1) (Polynucleobacter necessarius subsp. asymbioticus).